Consider the following 186-residue polypeptide: Ribosome-recycling factor (186 aa).

This sequence belongs to the RRF family.

Its subcellular location is the cytoplasm. Responsible for the release of ribosomes from messenger RNA at the termination of protein biosynthesis. May increase the efficiency of translation by recycling ribosomes from one round of translation to another. The polypeptide is Ribosome-recycling factor (Herminiimonas arsenicoxydans).